Reading from the N-terminus, the 193-residue chain is Dual-action ribosomal maturation protein DarP (193 aa).

Residues 1–10 show a composition bias toward basic and acidic residues; that stretch reads MRGRDEDTGE. 2 disordered regions span residues 1-20 and 170-193; these read MRGRDEDTGEFRGASRSQQR and SQKPGLESGDAGLEDEESASENDE. Residues 181 to 193 are compositionally biased toward acidic residues; sequence GLEDEESASENDE.

Belongs to the DarP family.

The protein resides in the cytoplasm. Member of a network of 50S ribosomal subunit biogenesis factors which assembles along the 30S-50S interface, preventing incorrect 23S rRNA structures from forming. Promotes peptidyl transferase center (PTC) maturation. The protein is Dual-action ribosomal maturation protein DarP of Xanthomonas campestris pv. campestris (strain 8004).